Consider the following 368-residue polypeptide: MNVLRSGIVTMLLLAAFSVQAACTWPAWEQFKKDYISQEGRVIDPSDARKITTSEGQSYGMFSALAANDRAAFDNILDWTQNNLAQGSLKERLPAWLWGKKENSKWEVLDSNSASDGDVWMAWSLLEAGRLWKEQRYTDIGSALLKRIAREEVVTVPGLGSMLLPGKVGFAEDNSWRFNPSYLPPTLAQYFTRFGAPWTTLRETNQRLLLETAPKGFSPDWVRYEKDKGWQLKAEKTLISSYDAIRVYMWVGMMPDSDPQKARMLNRFKPMATFTEKNGYPPEKVDVATGKAQGKGPVGFSAAMLPFLQNRDAQAVQRQRVADNFPGSDAYYNYVLTLFGQGWDQHRFRFSTKGELLPDWGQECANSH.

Residues 1 to 21 (MNVLRSGIVTMLLLAAFSVQA) form the signal peptide. The active-site Proton donor is the Glu-55. Residue Asp-116 is the Nucleophile of the active site.

It belongs to the glycosyl hydrolase 8 (cellulase D) family.

The protein resides in the secreted. It catalyses the reaction Endohydrolysis of (1-&gt;4)-beta-D-glucosidic linkages in cellulose, lichenin and cereal beta-D-glucans.. Its pathway is glycan metabolism; bacterial cellulose biosynthesis. Hydrolyzes carboxymethylcellulose. In Escherichia coli (strain K12), this protein is Endoglucanase (bcsZ).